Here is a 706-residue protein sequence, read N- to C-terminus: Fatty acid oxidation complex subunit alpha (706 aa).

An enoyl-CoA hydratase region spans residues 1–188 (MEKTFNLTRR…KMGLVNDVVP (188 aa)). The segment at 308–706 (RKVKKAVILG…TMAQENAHFF (399 aa)) is 3-hydroxyacyl-CoA dehydrogenase.

It in the N-terminal section; belongs to the enoyl-CoA hydratase/isomerase family. The protein in the central section; belongs to the 3-hydroxyacyl-CoA dehydrogenase family. In terms of assembly, heterotetramer of two alpha chains (FadJ) and two beta chains (FadI).

It is found in the cytoplasm. It carries out the reaction a (3S)-3-hydroxyacyl-CoA = a (2E)-enoyl-CoA + H2O. It catalyses the reaction a 4-saturated-(3S)-3-hydroxyacyl-CoA = a (3E)-enoyl-CoA + H2O. The catalysed reaction is a (3S)-3-hydroxyacyl-CoA + NAD(+) = a 3-oxoacyl-CoA + NADH + H(+). The enzyme catalyses (3S)-3-hydroxybutanoyl-CoA = (3R)-3-hydroxybutanoyl-CoA. It participates in lipid metabolism; fatty acid beta-oxidation. In terms of biological role, catalyzes the formation of a hydroxyacyl-CoA by addition of water on enoyl-CoA. Also exhibits 3-hydroxyacyl-CoA epimerase and 3-hydroxyacyl-CoA dehydrogenase activities. The sequence is that of Fatty acid oxidation complex subunit alpha from Shewanella baltica (strain OS185).